The chain runs to 360 residues: Ribosomal RNA large subunit methyltransferase M (360 aa).

S-adenosyl-L-methionine-binding positions include serine 187, 220 to 223 (CPGG), aspartate 239, aspartate 259, and aspartate 276. Lysine 305 serves as the catalytic Proton acceptor.

It belongs to the class I-like SAM-binding methyltransferase superfamily. RNA methyltransferase RlmE family. RlmM subfamily. Monomer.

It is found in the cytoplasm. The catalysed reaction is cytidine(2498) in 23S rRNA + S-adenosyl-L-methionine = 2'-O-methylcytidine(2498) in 23S rRNA + S-adenosyl-L-homocysteine + H(+). Its function is as follows. Catalyzes the 2'-O-methylation at nucleotide C2498 in 23S rRNA. In Shewanella sediminis (strain HAW-EB3), this protein is Ribosomal RNA large subunit methyltransferase M.